Here is a 592-residue protein sequence, read N- to C-terminus: Guanylate-binding protein 1 (592 aa).

The tract at residues 1 to 311 is GTPase domain (Globular); the sequence is MASEIHMTGP…NAISSGDLPC (311 aa). The region spanning 35-278 is the GB1/RHD3-type G domain; sequence TQPMVVVAIV…FCSYIFSNSK (244 aa). GTP is bound by residues 45–52, 67–69, and 97–101; these read GLYRTGKS, LGS, and DTEGL. Ser156 is subject to Phosphoserine; by PIM1. (Microbial infection) Glycyl lysine isopeptide (Lys-Gly) (interchain with G-Cter in ubiquitin) cross-links involve residues Lys207, Lys209, Lys210, Lys382, Lys562, Lys567, Lys573, and Lys587. Cysteine methyl ester is present on Cys589. The S-farnesyl cysteine moiety is linked to residue Cys589. Thr590 carries the post-translational modification Phosphothreonine; by PIM1. Positions 590–592 are cleaved as a propeptide — removed in mature form; that stretch reads TIS.

The protein belongs to the TRAFAC class dynamin-like GTPase superfamily. GB1/RHD3 GTPase family. GB1 subfamily. Homodimer; homodimerization occurs upon GTP-binding and is required for the second hydrolysis step from GDP to GMP. Undergoes conformational changes and oligomerization upon GTP-binding and hydrolysis. Heterodimer with other family members, including GBP2, GBP3, GBP4 and GBP5. Dimerization regulates subcellular location to membranous structures. Interacts with SQSTM1. Interacts (when phosphorylated) with 14-3-3 protein sigma (SFN); leading to GBP1 retention in the cytosol and inactivation. Isoprenylation is required for proper subcellular location. In terms of processing, phosphorylated at Ser-156 by PIM1 in absence of infection, inhibits GBP1: phosphorylation promotes interaction with 14-3-3 protein sigma (SFN), leading to GBP1 retention in the cytosol. Dephosphorylated in response to infection, liberating GBP1. Post-translationally, (Microbial infection) Ubiquitinated by S.flexneri IpaH9.8, leading to its degradation by the proteasome, thereby preventing its ability to promote host defense against bacterial infection.

It is found in the cytoplasmic vesicle membrane. The protein resides in the golgi apparatus membrane. It localises to the cell membrane. Its subcellular location is the cytoplasm. The protein localises to the cytosol. It is found in the secreted. The catalysed reaction is GTP + H2O = GDP + phosphate + H(+). The enzyme catalyses GDP + H2O = GMP + phosphate + H(+). Its function is as follows. Interferon (IFN)-inducible GTPase that plays important roles in innate immunity against a diverse range of bacterial, viral and protozoan pathogens. Hydrolyzes GTP to GMP in two consecutive cleavage reactions: GTP is first hydrolyzed to GDP and then to GMP in a processive manner. Following infection, recruited to the pathogen-containing vacuoles or vacuole-escaped bacteria and promotes both inflammasome assembly and autophagy. Acts as a positive regulator of inflammasome assembly by facilitating the detection of inflammasome ligands from pathogens. Involved in the lysis of pathogen-containing vacuoles, releasing pathogens into the cytosol. Following pathogen release in the cytosol, forms a protein coat in a GTPase-dependent manner that encapsulates pathogens and promotes the detection of ligands by pattern recognition receptors. Plays a key role in inflammasome assembly in response to infection by Gram-negative bacteria: following pathogen release in the cytosol, forms a protein coat that encapsulates Gram-negative bacteria and directly binds to lipopolysaccharide (LPS), disrupting the O-antigen barrier and unmasking lipid A that is that detected by the non-canonical inflammasome effector CASP4/CASP11. Also promotes recruitment of proteins that mediate bacterial cytolysis, leading to release double-stranded DNA (dsDNA) that activates the AIM2 inflammasome. Involved in autophagy by regulating bacteriolytic peptide generation via its interaction with ubiquitin-binding protein SQSTM1, which delivers monoubiquitinated proteins to autolysosomes for the generation of bacteriolytic peptides. Confers protection to several pathogens, including the bacterial pathogens L.monocytogenes and M.bovis BCG as well as the protozoan pathogen T.gondii. Exhibits antiviral activity against influenza virus. The chain is Guanylate-binding protein 1 from Homo sapiens (Human).